A 358-amino-acid polypeptide reads, in one-letter code: Alternative oxidase, mitochondrial (358 aa).

Residues Leu152–Leu172 traverse the membrane as a helical segment. Fe cation-binding residues include Glu159, Glu198, and His201. Residues Met218 to Pro238 form a helical membrane-spanning segment. Fe cation contacts are provided by Glu249, Glu306, and His309.

The protein belongs to the alternative oxidase family. Requires Fe cation as cofactor.

The protein localises to the mitochondrion inner membrane. Its function is as follows. Catalyzes cyanide-resistant oxygen consumption. May increase respiration when the cytochrome respiratory pathway is restricted, or in response to low temperatures. The sequence is that of Alternative oxidase, mitochondrial (AOX1) from Monilinia fructicola (Brown rot fungus).